A 465-amino-acid polypeptide reads, in one-letter code: Alpha-2A adrenergic receptor (465 aa).

The Extracellular portion of the chain corresponds to 1 to 48 (MFRQEQPLAEGSFAPMGSLQPDAGNASWNGTEAPGGGARATPYSLQVT). N-linked (GlcNAc...) asparagine glycans are attached at residues N25 and N29. Residues 49–74 (LTLVCLAGLLMLLTVFGNVLVIIAVF) traverse the membrane as a helical segment. At 75 to 85 (TSRALKAPQNL) the chain is on the cytoplasmic side. Residues 86 to 111 (FLVSLASADILVATLVIPFSLANEVM) form a helical membrane-spanning segment. Residues 112–121 (GYWYFGKAWC) are Extracellular-facing. C121 and C203 are oxidised to a cystine. The helical transmembrane segment at 122 to 144 (EIYLALDVLFCTSSIVHLCAISL) threads the bilayer. Residues 145–166 (DRYWSITQAIEYNLKRTPRRIK) lie on the Cytoplasmic side of the membrane. Residues 167–187 (AIIITVWVISAVISFPPLISI) traverse the membrane as a helical segment. Residues 188–209 (EKKGGGGGPQPAEPRCEINDQK) are Extracellular-facing. Residues 210–232 (WYVISSCIGSFFAPCLIMILVYV) traverse the membrane as a helical segment. The Cytoplasmic segment spans residues 233–389 (RIYQIAKRRT…RQNREKRFTF (157 aa)). The disordered stretch occupies residues 242-368 (TRVPPSRRGP…TPAAGPGEER (127 aa)). Basic and acidic residues predominate over residues 313–330 (SSDHAERPPGPRRPERGP). Residue S346 is modified to Phosphoserine. R368 carries the omega-N-methylarginine modification. The chain crosses the membrane as a helical span at residues 390 to 410 (VLAVVIGVFVVCWFPFFFTYT). Residues 411–424 (LTAVGCSVPRTLFK) are Extracellular-facing. The helical transmembrane segment at 425 to 444 (FFFWFGYCNSSLNPVIYTIF) threads the bilayer. At 445 to 465 (NHDFRRAFKKILCRGDRKRIV) the chain is on the cytoplasmic side. C457 carries S-palmitoyl cysteine lipidation.

The protein belongs to the G-protein coupled receptor 1 family. Adrenergic receptor subfamily. ADRA2A sub-subfamily.

The protein localises to the cell membrane. Alpha-2 adrenergic receptors mediate the catecholamine-induced inhibition of adenylate cyclase through the action of G proteins. The rank order of potency for agonists of this receptor is oxymetazoline &gt; clonidine &gt; epinephrine &gt; norepinephrine &gt; phenylephrine &gt; dopamine &gt; p-synephrine &gt; p-tyramine &gt; serotonin = p-octopamine. For antagonists, the rank order is yohimbine &gt; phentolamine = mianserine &gt; chlorpromazine = spiperone = prazosin &gt; propanolol &gt; alprenolol = pindolol. The chain is Alpha-2A adrenergic receptor from Homo sapiens (Human).